A 78-amino-acid polypeptide reads, in one-letter code: Large ribosomal subunit protein bL28 (78 aa).

It belongs to the bacterial ribosomal protein bL28 family.

The polypeptide is Large ribosomal subunit protein bL28 (Ruthia magnifica subsp. Calyptogena magnifica).